Here is a 576-residue protein sequence, read N- to C-terminus: Mitogen-activated protein kinase 15 (576 aa).

Residues 20–50 are disordered; the sequence is RPSSSSSSNNHDQIQNPPTVSNPNDDEDLKK. Residues 28–42 show a composition bias toward polar residues; sequence NNHDQIQNPPTVSNP. The 292-residue stretch at 90 to 381 folds into the Protein kinase domain; sequence YQIQEVVGKG…AEEALADPYF (292 aa). ATP-binding positions include 96–104 and K119; that span reads VGKGSYGVV. The active-site Proton acceptor is the D216. T252 carries the post-translational modification Phosphothreonine. The TXY motif lies at 252–254; the sequence is TDY. Y254 carries the phosphotyrosine modification. T257 is modified (phosphothreonine). Residues 458–535 form a disordered region; that stretch reads EENQGPGGRS…GGGYSARNLM (78 aa). The segment covering 477–501 has biased composition (basic and acidic residues); it reads LPRERVPASKNETVEERSNDIERRT. Residues 504 to 520 show a composition bias toward polar residues; sequence AVASTLDSPKASQQAEG.

This sequence belongs to the protein kinase superfamily. CMGC Ser/Thr protein kinase family. MAP kinase subfamily. As to quaternary structure, interacts with MKK7. Post-translationally, dually phosphorylated on Thr-252 and Tyr-254, which activates the enzyme.

The catalysed reaction is L-seryl-[protein] + ATP = O-phospho-L-seryl-[protein] + ADP + H(+). It carries out the reaction L-threonyl-[protein] + ATP = O-phospho-L-threonyl-[protein] + ADP + H(+). Activated by threonine and tyrosine phosphorylation. The sequence is that of Mitogen-activated protein kinase 15 (MPK15) from Arabidopsis thaliana (Mouse-ear cress).